We begin with the raw amino-acid sequence, 185 residues long: MRNLVKYVGIGLLVMGLAACDDKDTNATAQGSVAESNATGNPVNLLDGKLSFSLPADMTDQSGKLGTQANNMHVWSDATGQKAVIVIMGDDPKEDLAVLAKRLEDQQRSRDPQLQVVTNKAIELKGHKMQQLDSIISAKGQTAYSSVILGNVGNQLLTMQITLPADDQQKAQTTAENIINTLVIQ.

A signal peptide spans 1-19; it reads MRNLVKYVGIGLLVMGLAA. A lipid anchor (N-palmitoyl cysteine) is attached at Cys20. The S-diacylglycerol cysteine moiety is linked to residue Cys20.

Belongs to the DcrB family.

Its subcellular location is the cell membrane. In terms of biological role, plays a role in cell envelope biogenesis, maintenance of cell envelope integrity and membrane homeostasis. Essential for lipoprotein maturation under conditions where membrane fluidity may be altered. The protein is Inner membrane lipoprotein DcrB of Shigella flexneri.